The sequence spans 476 residues: Aspartyl/glutamyl-tRNA(Asn/Gln) amidotransferase subunit B (476 aa).

The protein belongs to the GatB/GatE family. GatB subfamily. As to quaternary structure, heterotrimer of A, B and C subunits.

It catalyses the reaction L-glutamyl-tRNA(Gln) + L-glutamine + ATP + H2O = L-glutaminyl-tRNA(Gln) + L-glutamate + ADP + phosphate + H(+). The enzyme catalyses L-aspartyl-tRNA(Asn) + L-glutamine + ATP + H2O = L-asparaginyl-tRNA(Asn) + L-glutamate + ADP + phosphate + 2 H(+). Functionally, allows the formation of correctly charged Asn-tRNA(Asn) or Gln-tRNA(Gln) through the transamidation of misacylated Asp-tRNA(Asn) or Glu-tRNA(Gln) in organisms which lack either or both of asparaginyl-tRNA or glutaminyl-tRNA synthetases. The reaction takes place in the presence of glutamine and ATP through an activated phospho-Asp-tRNA(Asn) or phospho-Glu-tRNA(Gln). This chain is Aspartyl/glutamyl-tRNA(Asn/Gln) amidotransferase subunit B, found in Clostridium kluyveri (strain ATCC 8527 / DSM 555 / NBRC 12016 / NCIMB 10680 / K1).